The primary structure comprises 171 residues: Co-chaperone protein HscB (171 aa).

Positions 2 to 74 (DYFTLFGLPA…LMRAEYLLSL (73 aa)) constitute a J domain.

Belongs to the HscB family. Interacts with HscA and stimulates its ATPase activity. Interacts with IscU.

Co-chaperone involved in the maturation of iron-sulfur cluster-containing proteins. Seems to help targeting proteins to be folded toward HscA. In Shigella flexneri serotype 5b (strain 8401), this protein is Co-chaperone protein HscB.